Consider the following 325-residue polypeptide: Tagatose 1,6-diphosphate aldolase (325 aa).

Belongs to the aldolase LacD family.

It carries out the reaction D-tagatofuranose 1,6-bisphosphate = D-glyceraldehyde 3-phosphate + dihydroxyacetone phosphate. It participates in carbohydrate metabolism; D-tagatose 6-phosphate degradation; D-glyceraldehyde 3-phosphate and glycerone phosphate from D-tagatose 6-phosphate: step 2/2. The polypeptide is Tagatose 1,6-diphosphate aldolase (Staphylococcus epidermidis (strain ATCC 12228 / FDA PCI 1200)).